The primary structure comprises 62 residues: Photosystem II reaction center protein Z (62 aa).

The next 2 helical transmembrane spans lie at 8 to 28 (AVFALIATSLILLISVPVVFA) and 41 to 61 (FSGTSLWIGLVFLVAILNSLI).

This sequence belongs to the PsbZ family. In terms of assembly, PSII is composed of 1 copy each of membrane proteins PsbA, PsbB, PsbC, PsbD, PsbE, PsbF, PsbH, PsbI, PsbJ, PsbK, PsbL, PsbM, PsbT, PsbY, PsbZ, Psb30/Ycf12, at least 3 peripheral proteins of the oxygen-evolving complex and a large number of cofactors. It forms dimeric complexes.

Its subcellular location is the plastid. It localises to the chloroplast thylakoid membrane. May control the interaction of photosystem II (PSII) cores with the light-harvesting antenna, regulates electron flow through the 2 photosystem reaction centers. PSII is a light-driven water plastoquinone oxidoreductase, using light energy to abstract electrons from H(2)O, generating a proton gradient subsequently used for ATP formation. This is Photosystem II reaction center protein Z from Phalaenopsis aphrodite subsp. formosana (Moth orchid).